We begin with the raw amino-acid sequence, 233 residues long: tRNA (guanine-N(7)-)-methyltransferase (233 aa).

Residues 1–21 (MTEESHPLRGAGNFFGRRHGK) are disordered. S-adenosyl-L-methionine-binding residues include glutamate 64, glutamate 89, aspartate 116, and aspartate 138. The active site involves aspartate 138. Residues lysine 142, aspartate 174, and 212-215 (TRYE) each bind substrate.

The protein belongs to the class I-like SAM-binding methyltransferase superfamily. TrmB family.

It carries out the reaction guanosine(46) in tRNA + S-adenosyl-L-methionine = N(7)-methylguanosine(46) in tRNA + S-adenosyl-L-homocysteine. The protein operates within tRNA modification; N(7)-methylguanine-tRNA biosynthesis. Its function is as follows. Catalyzes the formation of N(7)-methylguanine at position 46 (m7G46) in tRNA. The chain is tRNA (guanine-N(7)-)-methyltransferase from Brucella anthropi (strain ATCC 49188 / DSM 6882 / CCUG 24695 / JCM 21032 / LMG 3331 / NBRC 15819 / NCTC 12168 / Alc 37) (Ochrobactrum anthropi).